The sequence spans 915 residues: Isoleucine--tRNA ligase (915 aa).

A 'HIGH' region motif is present at residues 57–67 (PYANGNLHMGH). Glutamate 554 provides a ligand contact to L-isoleucyl-5'-AMP. The 'KMSKS' region signature appears at 595 to 599 (KMSKS). Residue lysine 598 participates in ATP binding. Zn(2+) is bound by residues cysteine 885, cysteine 888, cysteine 905, and cysteine 908.

This sequence belongs to the class-I aminoacyl-tRNA synthetase family. IleS type 1 subfamily. In terms of assembly, monomer. It depends on Zn(2+) as a cofactor.

It localises to the cytoplasm. The enzyme catalyses tRNA(Ile) + L-isoleucine + ATP = L-isoleucyl-tRNA(Ile) + AMP + diphosphate. In terms of biological role, catalyzes the attachment of isoleucine to tRNA(Ile). As IleRS can inadvertently accommodate and process structurally similar amino acids such as valine, to avoid such errors it has two additional distinct tRNA(Ile)-dependent editing activities. One activity is designated as 'pretransfer' editing and involves the hydrolysis of activated Val-AMP. The other activity is designated 'posttransfer' editing and involves deacylation of mischarged Val-tRNA(Ile). In Staphylococcus carnosus (strain TM300), this protein is Isoleucine--tRNA ligase.